Reading from the N-terminus, the 266-residue chain is Large ribosomal subunit protein eL8 (266 aa).

Basic residues predominate over residues 1–11 (MPKGKKAKGKK). Disordered regions lie at residues 1-28 (MPKG…KKVV) and 105-134 (ETKQ…KRPP). Basic and acidic residues predominate over residues 116 to 130 (ARAEQKAAGKGDAPT).

Belongs to the eukaryotic ribosomal protein eL8 family. In terms of assembly, component of the large ribosomal subunit.

The protein resides in the cytoplasm. Component of the large ribosomal subunit. The ribosome is a large ribonucleoprotein complex responsible for the synthesis of proteins in the cell. The polypeptide is Large ribosomal subunit protein eL8 (rpl7a) (Takifugu rubripes (Japanese pufferfish)).